The primary structure comprises 173 residues: Alpha-crystallin A chain (173 aa).

M1 is subject to N-acetylmethionine. Residues 1–63 (MDIAIQHPWF…RSVLDSGVSE (63 aa)) are required for complex formation with BFSP1 and BFSP2. Q6 bears the Deamidated glutamine; partial mark. Phosphoserine is present on S45. Residue Q50 is modified to Deamidated glutamine; partial. The region spanning 52–162 (LFRSVLDSGV…GHSERAIPVS (111 aa)) is the sHSP domain. K70 carries the N6-acetyllysine modification. Q90 carries the deamidated glutamine; partial modification. N6-acetyllysine is present on K99. H100 provides a ligand contact to Zn(2+). N101 carries the deamidated asparagine; partial modification. Zn(2+) is bound by residues E102 and H107. S122 carries the post-translational modification Phosphoserine. At N123 the chain carries Deamidated asparagine; partial. Positions 144–173 (PKIPSGMDAGHSERAIPVSREEKPSSAPSS) are disordered. Over residues 153–167 (GHSERAIPVSREEKP) the composition is skewed to basic and acidic residues. H154 lines the Zn(2+) pocket. A glycan (O-linked (GlcNAc) serine) is linked at S162.

It belongs to the small heat shock protein (HSP20) family. As to quaternary structure, heteromer composed of three CRYAA and one CRYAB subunits. Inter-subunit bridging via zinc ions enhances stability, which is crucial as there is no protein turn over in the lens. Can also form homodimers and homotetramers (dimers of dimers) which serve as the building blocks of homooligomers. Within homooligomers, the zinc-binding motif is created from residues of 3 different molecules. His-100 and Glu-102 from one molecule are ligands of the zinc ion, and His-107 and His-154 residues from additional molecules complete the site with tetrahedral coordination geometry. Part of a complex required for lens intermediate filament formation composed of BFSP1, BFSP2 and CRYAA. In terms of processing, acetylation at Lys-70 may increase chaperone activity. Undergoes age-dependent proteolytical cleavage at the C-terminus.

It localises to the cytoplasm. The protein resides in the nucleus. Contributes to the transparency and refractive index of the lens. Acts as a chaperone, preventing aggregation of various proteins under a wide range of stress conditions. Required for the correct formation of lens intermediate filaments as part of a complex composed of BFSP1, BFSP2 and CRYAA. This is Alpha-crystallin A chain (CRYAA) from Ceratotherium simum (White rhinoceros).